The primary structure comprises 216 residues: Imidazole glycerol phosphate synthase subunit HisH (216 aa).

The 215-residue stretch at 2–216 (RVAIIDYGSG…LIANFLKWKP (215 aa)) folds into the Glutamine amidotransferase type-1 domain. C88 (nucleophile) is an active-site residue. Active-site residues include H196 and E198.

As to quaternary structure, heterodimer of HisH and HisF.

Its subcellular location is the cytoplasm. It catalyses the reaction 5-[(5-phospho-1-deoxy-D-ribulos-1-ylimino)methylamino]-1-(5-phospho-beta-D-ribosyl)imidazole-4-carboxamide + L-glutamine = D-erythro-1-(imidazol-4-yl)glycerol 3-phosphate + 5-amino-1-(5-phospho-beta-D-ribosyl)imidazole-4-carboxamide + L-glutamate + H(+). The catalysed reaction is L-glutamine + H2O = L-glutamate + NH4(+). The protein operates within amino-acid biosynthesis; L-histidine biosynthesis; L-histidine from 5-phospho-alpha-D-ribose 1-diphosphate: step 5/9. IGPS catalyzes the conversion of PRFAR and glutamine to IGP, AICAR and glutamate. The HisH subunit catalyzes the hydrolysis of glutamine to glutamate and ammonia as part of the synthesis of IGP and AICAR. The resulting ammonia molecule is channeled to the active site of HisF. This chain is Imidazole glycerol phosphate synthase subunit HisH, found in Brucella abortus biovar 1 (strain 9-941).